Here is a 280-residue protein sequence, read N- to C-terminus: Protein IMPACT homolog (280 aa).

An RWD domain is found at 9–109 (DELLALESIY…QAAAERESKL (101 aa)).

Belongs to the IMPACT family. In terms of assembly, interacts (via N-terminus) with gcn1 (via C-terminus); this interaction reduces the gcn1-gcn20 complex formation and prevents the interaction of gcn1 with gcn2 protein kinase and gcn2 activation in amino acid-starved cells. Interacts (via C-terminus) with act1; this interaction occurs in a gcn1-independent manner. Interacts with rpl39; this interaction occurs in a gcn1-independent manner. Associates (via middle region) with ribosomes; this association occurs in a gcn1-independent manner and persists under amino acid starvation conditions.

Its subcellular location is the cytoplasm. It is found in the nucleus. Translational regulator that ensures constant high levels of translation under amino acid starvation. Plays a role as a negative regulator of the gcn2 kinase activity; impairs gcn1-mediated gcn2 activation, and hence gcn2-mediated eIF-2-alpha phosphorylation in amino acid-starved cells and subsequent down-regulation of protein synthesis. In normal conditions, it resides in a actin complex and has no activity. In Schizosaccharomyces pombe (strain 972 / ATCC 24843) (Fission yeast), this protein is Protein IMPACT homolog (yih1).